The sequence spans 363 residues: MTARSRPGYFRQEINKTIWEVPDRYKDLKQVGTGAYGTVCYALDRRTGAKVAIKKLHRPFQSDLFAKRAYRELRLLKHMKHDNVIGLVDVFTADLSLDRFHDFYLVMPFMGTDLGKLMKMERLSEERVQYLVYQMLKGLKYIHAAGIIHRDLKPGNLAINEECELKILDFGLARQTDSEMTGYVVTRWYRAPEVILSWMHYTQTVDIWSVGCIMAEMLLGKPLFKGHDHLDQLMEIMKVTGTPSKEFTAKLQSEDARNYVTKLPRFRKKDLRILLPNVNPQAIKVLDGMLLLDPESRITAAEALAFPFFSEFREPEEETEAPPYDHSLDEADQSLEQWKRLTFTEILTFQPAPAVAESKETAL.

The Protein kinase domain occupies 25–309 (YKDLKQVGTG…AAEALAFPFF (285 aa)). ATP is bound by residues 31–39 (VGTGAYGTV) and Lys-54. The active-site Proton acceptor is Asp-151. Residue Thr-181 is modified to Phosphothreonine. The TXY motif lies at 181–183 (TGY). A Phosphotyrosine modification is found at Tyr-183.

It belongs to the protein kinase superfamily. CMGC Ser/Thr protein kinase family. MAP kinase subfamily. The cofactor is Mg(2+). In terms of processing, dually phosphorylated on Thr-181 and Tyr-183, which activates the enzyme.

The protein resides in the cytoplasm. The enzyme catalyses L-seryl-[protein] + ATP = O-phospho-L-seryl-[protein] + ADP + H(+). The catalysed reaction is L-threonyl-[protein] + ATP = O-phospho-L-threonyl-[protein] + ADP + H(+). Its activity is regulated as follows. Activated by threonine and tyrosine phosphorylation. Its function is as follows. Serine/threonine kinase which acts as an essential component of the MAP kinase signal transduction pathway. MAPK12 is one of the four p38 MAPKs which play an important role in the cascades of cellular responses evoked by extracellular stimuli such as pro-inflammatory cytokines or physical stress leading to direct activation of transcription factors. Accordingly, p38 MAPKs phosphorylate a broad range of proteins and it has been estimated that they may have approximately 200 to 300 substrates each. Some of the targets are downstream kinases such as MAPKAPK2, which are activated through phosphorylation and further phosphorylate additional targets. This chain is Mitogen-activated protein kinase 12 (mapk12), found in Danio rerio (Zebrafish).